A 130-amino-acid chain; its full sequence is Small ribosomal subunit protein uS9 (130 aa).

This sequence belongs to the universal ribosomal protein uS9 family.

This Caldicellulosiruptor saccharolyticus (strain ATCC 43494 / DSM 8903 / Tp8T 6331) protein is Small ribosomal subunit protein uS9.